Consider the following 683-residue polypeptide: FAD-binding monooxygenase ausC (683 aa).

Asn5 is a glycosylation site (N-linked (GlcNAc...) asparagine). The chain crosses the membrane as a helical span at residues 111–131 (ILIIGAGFGGLLFAVRLIQTG). FAD is bound by residues 150-153 (TWYW), 162-163 (DT), and Tyr168. 160–162 (MCD) is an NADP(+) binding site. A glycan (N-linked (GlcNAc...) asparagine) is linked at Asn286. Residues 310 to 316 (TGASAVQ) and 333 to 334 (RT) contribute to the NADP(+) site. N-linked (GlcNAc...) asparagine glycans are attached at residues Asn525 and Asn572.

This sequence belongs to the FAD-binding monooxygenase family. The cofactor is FAD.

The protein resides in the membrane. The catalysed reaction is preaustinoid A + AH2 + O2 = preaustinoid A1 + A + H2O. Its pathway is secondary metabolite biosynthesis; terpenoid biosynthesis. FAD-binding monooxygenase; part of the gene cluster A that mediates the biosynthesis of austinol and dehydroaustinol, two fungal meroterpenoids. The first step of the pathway is the synthesis of 3,5-dimethylorsellinic acid by the polyketide synthase ausA. 3,5-dimethylorsellinic acid is then prenylated by the polyprenyl transferase ausN. Further epoxidation by the FAD-dependent monooxygenase ausM and cyclization by the probable terpene cyclase ausL lead to the formation of protoaustinoid A. Protoaustinoid A is then oxidized to spiro-lactone preaustinoid A3 by the combined action of the FAD-binding monooxygenases ausB and ausC, and the dioxygenase ausE. Acid-catalyzed keto-rearrangement and ring contraction of the tetraketide portion of preaustinoid A3 by ausJ lead to the formation of preaustinoid A4. The aldo-keto reductase ausK, with the help of ausH, is involved in the next step by transforming preaustinoid A4 into isoaustinone which is in turn hydroxylated by the P450 monooxygenase ausI to form austinolide. Finally, the cytochrome P450 monooxygenase ausG modifies austinolide to austinol. Austinol can be further modified to dehydroaustinol which forms a diffusible complex with diorcinol that initiates conidiation. Due to genetic rearrangements of the clusters and the subsequent loss of some enzymes, the end products of the Emericella nidulans austinoid biosynthesis clusters are austinol and dehydroaustinol, even if additional enzymes, such as the O-acetyltransferase ausQ and the cytochrome P450 monooxygenase ausR are still functional. The sequence is that of FAD-binding monooxygenase ausC from Emericella nidulans (strain FGSC A4 / ATCC 38163 / CBS 112.46 / NRRL 194 / M139) (Aspergillus nidulans).